Consider the following 312-residue polypeptide: Ribonuclease H2 subunit B (312 aa).

The residue at position 2 (Ala2) is an N-acetylalanine. Residues 236-256 are disordered; that stretch reads EPSASLPNPPSKKIKLSDEPV. At Lys295 the chain carries N6-acetyllysine. A Phosphoserine modification is found at Ser296.

This sequence belongs to the RNase H2 subunit B family. In terms of assembly, the RNase H2 complex is a heterotrimer composed of the catalytic subunit RNASEH2A and the non-catalytic subunits RNASEH2B and RNASEH2C. In terms of tissue distribution, widely expressed.

The protein localises to the nucleus. In terms of biological role, non catalytic subunit of RNase H2, an endonuclease that specifically degrades the RNA of RNA:DNA hybrids. Participates in DNA replication, possibly by mediating the removal of lagging-strand Okazaki fragment RNA primers during DNA replication. Mediates the excision of single ribonucleotides from DNA:RNA duplexes. The protein is Ribonuclease H2 subunit B (RNASEH2B) of Homo sapiens (Human).